Consider the following 172-residue polypeptide: Galectin-related protein (172 aa).

Ala-2 bears the N-acetylalanine mark. Phosphoserine occurs at positions 22 and 25. The 130-residue stretch at 39-168 folds into the Galectin domain; that stretch reads PFCGHIKGGM…TIKINGDLQI (130 aa).

As to quaternary structure, monomer.

In terms of biological role, does not bind lactose, and may not bind carbohydrates. The chain is Galectin-related protein (Lgalsl) from Mus musculus (Mouse).